We begin with the raw amino-acid sequence, 341 residues long: UDP-N-acetylenolpyruvoylglucosamine reductase (341 aa).

Residues 13-185 enclose the FAD-binding PCMH-type domain; the sequence is FGVEQSCLSM…TAVGLRLPKA (173 aa). Residue Arg-161 is part of the active site. Ser-231 acts as the Proton donor in catalysis. Residue Glu-327 is part of the active site.

It belongs to the MurB family. Requires FAD as cofactor.

Its subcellular location is the cytoplasm. It carries out the reaction UDP-N-acetyl-alpha-D-muramate + NADP(+) = UDP-N-acetyl-3-O-(1-carboxyvinyl)-alpha-D-glucosamine + NADPH + H(+). It participates in cell wall biogenesis; peptidoglycan biosynthesis. Cell wall formation. This chain is UDP-N-acetylenolpyruvoylglucosamine reductase, found in Shewanella sp. (strain MR-4).